We begin with the raw amino-acid sequence, 266 residues long: Enterotoxin type C-3 (266 aa).

A signal peptide spans 1 to 27; that stretch reads MYKRLFISRVILIFALILVISTPNVLA. Zn(2+)-binding residues include Asp-36 and Asp-110. Cysteines 120 and 137 form a disulfide. Positions 145 and 149 each coordinate Zn(2+).

It belongs to the staphylococcal/streptococcal toxin family. Interacts with MHC class II molecules composed of alpha/HLA-DRA and beta/HLA-DRB1 chains. Interacts with host T-cell receptor/TCR beta variable chain TRBV8-2.

The protein localises to the secreted. Staphylococcal enterotoxin that activates the host immune system by binding as unprocessed molecules to major histocompatibility (MHC) complex class II and T-cell receptor (TCR) molecules. In turn, this ternary complex activates a large number of T-lymphocytes initiating a systemic release of pro-inflammatory cytokines. Also causes the intoxication staphylococcal food poisoning syndrome. In Staphylococcus aureus, this protein is Enterotoxin type C-3 (entC3).